We begin with the raw amino-acid sequence, 115 residues long: NADH-ubiquinone oxidoreductase chain 3 (115 aa).

The next 3 helical transmembrane spans lie at 3–23 (LFVALFINASLSFILISVAFW), 55–75 (FFLVAITFLLFDLEIALLLPL), and 84–104 (LSAMMITSFILISILALGLIY).

The protein belongs to the complex I subunit 3 family. As to quaternary structure, core subunit of respiratory chain NADH dehydrogenase (Complex I) which is composed of 45 different subunits. Interacts with TMEM186. Interacts with TMEM242.

It localises to the mitochondrion inner membrane. It catalyses the reaction a ubiquinone + NADH + 5 H(+)(in) = a ubiquinol + NAD(+) + 4 H(+)(out). Core subunit of the mitochondrial membrane respiratory chain NADH dehydrogenase (Complex I) which catalyzes electron transfer from NADH through the respiratory chain, using ubiquinone as an electron acceptor. Essential for the catalytic activity of complex I. The polypeptide is NADH-ubiquinone oxidoreductase chain 3 (Sigmodon hispidus (Hispid cotton rat)).